Reading from the N-terminus, the 144-residue chain is Grifin (144 aa).

The Galectin domain occupies 5–133 (FEAFCAGGLA…DHQLAQVELA (129 aa)). Phosphoserine is present on serine 138.

In terms of assembly, homodimer. As to expression, lens-specific. Located at the interface between lens fiber cells (at protein level).

In Rattus norvegicus (Rat), this protein is Grifin (Grifin).